The chain runs to 326 residues: Isoaspartyl peptidase/L-asparaginase (326 aa).

Thr185 acts as the Nucleophile in catalysis. Residues 213 to 216 (RVGD) and 236 to 239 (TGHG) each bind substrate.

It belongs to the Ntn-hydrolase family. In terms of assembly, heterodimer of an alpha and beta chain produced by autocleavage. This heterodimer may then dimerize in turn, giving rise to a heterotetramer. In terms of processing, cleaved into an alpha and beta chain by autocatalysis; this activates the enzyme. The N-terminal residue of the beta subunit is responsible for the nucleophile hydrolase activity. As to expression, high expression in the heart and brain while low to minimal expression in the other tissues. In ocular tissues, high levels is observed in the optic nerve and retina while relatively low levels of expression are detected in the iris-ciliary body, lens or retinal pigment epithelium.

The protein resides in the cytoplasm. The catalysed reaction is L-asparagine + H2O = L-aspartate + NH4(+). It catalyses the reaction Cleavage of a beta-linked Asp residue from the N-terminus of a polypeptide.. Functionally, has both L-asparaginase and beta-aspartyl peptidase activity. May be involved in the production of L-aspartate, which can act as an excitatory neurotransmitter in some brain regions. Is highly active with L-Asp beta-methyl ester. Besides, has catalytic activity toward beta-aspartyl dipeptides and their methyl esters, including beta-L-Asp-L-Phe, beta-L-Asp-L-Phe methyl ester (aspartame), beta-L-Asp-L-Ala, beta-L-Asp-L-Leu and beta-L-Asp-L-Lys. Does not have aspartylglucosaminidase activity and is inactive toward GlcNAc-L-Asn. Likewise, has no activity toward glutamine. In Mus musculus (Mouse), this protein is Isoaspartyl peptidase/L-asparaginase (Asrgl1).